Reading from the N-terminus, the 348-residue chain is 5-deoxyribose 1-phosphate isomerase (348 aa).

Substrate-binding positions include 49–51 (RGA), Arg-92, and Gln-199. The active-site Proton donor is Asp-240. 250 to 251 (NK) lines the substrate pocket.

Belongs to the EIF-2B alpha/beta/delta subunits family. DrdI subfamily. In terms of assembly, homodimer.

The catalysed reaction is 5-deoxy-alpha-D-ribose 1-phosphate = 5-deoxy-D-ribulose 1-phosphate. It carries out the reaction 5-(methylsulfanyl)-alpha-D-ribose 1-phosphate = 5-(methylsulfanyl)-D-ribulose 1-phosphate. Its pathway is carbohydrate degradation. Catalyzes the isomerization of 5-deoxy-alpha-D-ribose 1-phosphate to 5-deoxy-D-ribulose 1-phosphate, as part of a 5-deoxyribose salvage pathway that recycles this toxic radical SAM enzyme by-product to mainstream metabolites. Also seems to be able to catalyze the conversion of methylthioribose-1-phosphate (MTR-1-P) into methylthioribulose-1-phosphate (MTRu-1-P). However this enzyme may not function in methionine salvage in B.thuringiensis since it exists a paralog (MtnA) present in the methionine salvage pathway cluster. The chain is 5-deoxyribose 1-phosphate isomerase from Bacillus thuringiensis serovar kurstaki (strain ATCC 35866 / NRRL B-4488 / HD73).